The primary structure comprises 467 residues: Ribulose bisphosphate carboxylase large chain (467 aa).

N6,N6,N6-trimethyllysine is present on Lys5. Positions 114 and 164 each coordinate substrate. Residue Lys166 is the Proton acceptor of the active site. Lys168 provides a ligand contact to substrate. Mg(2+)-binding residues include Lys192, Asp194, and Glu195. At Lys192 the chain carries N6-carboxylysine. The active-site Proton acceptor is the His285. The substrate site is built by Arg286, His318, and Ser370.

This sequence belongs to the RuBisCO large chain family. Type I subfamily. In terms of assembly, heterohexadecamer of 8 large chains and 8 small chains; disulfide-linked. The disulfide link is formed within the large subunit homodimers. Mg(2+) is required as a cofactor. Post-translationally, the disulfide bond which can form in the large chain dimeric partners within the hexadecamer appears to be associated with oxidative stress and protein turnover.

It is found in the plastid. Its subcellular location is the chloroplast. It carries out the reaction 2 (2R)-3-phosphoglycerate + 2 H(+) = D-ribulose 1,5-bisphosphate + CO2 + H2O. The catalysed reaction is D-ribulose 1,5-bisphosphate + O2 = 2-phosphoglycolate + (2R)-3-phosphoglycerate + 2 H(+). Functionally, ruBisCO catalyzes two reactions: the carboxylation of D-ribulose 1,5-bisphosphate, the primary event in carbon dioxide fixation, as well as the oxidative fragmentation of the pentose substrate in the photorespiration process. Both reactions occur simultaneously and in competition at the same active site. The sequence is that of Ribulose bisphosphate carboxylase large chain from Hydrophyllum virginianum (Eastern waterleaf).